The chain runs to 119 residues: Large ribosomal subunit protein bL19 (119 aa).

Belongs to the bacterial ribosomal protein bL19 family.

In terms of biological role, this protein is located at the 30S-50S ribosomal subunit interface and may play a role in the structure and function of the aminoacyl-tRNA binding site. In Saccharopolyspora erythraea (strain ATCC 11635 / DSM 40517 / JCM 4748 / NBRC 13426 / NCIMB 8594 / NRRL 2338), this protein is Large ribosomal subunit protein bL19.